The chain runs to 242 residues: Ribosomal RNA small subunit methyltransferase G (242 aa).

S-adenosyl-L-methionine is bound by residues Gly-78, Phe-83, 129 to 130, and Arg-148; that span reads AE.

This sequence belongs to the methyltransferase superfamily. RNA methyltransferase RsmG family.

It is found in the cytoplasm. Functionally, specifically methylates the N7 position of a guanine in 16S rRNA. The protein is Ribosomal RNA small subunit methyltransferase G of Lachnoclostridium phytofermentans (strain ATCC 700394 / DSM 18823 / ISDg) (Clostridium phytofermentans).